Reading from the N-terminus, the 390-residue chain is Prostaglandin E2 receptor EP3 subtype (390 aa).

The Extracellular portion of the chain corresponds to 1 to 53 (MKETRGYGGDAPFCTRLNHSYTGMWAPERSAEARGNLTRPPGSGEDCGSVSVA). N-linked (GlcNAc...) asparagine glycans are attached at residues asparagine 18 and asparagine 36. Residues 54–78 (FPITMLLTGFVGNALAMLLVSRSYR) form a helical membrane-spanning segment. The Cytoplasmic portion of the chain corresponds to 79–91 (RRESKRKKSFLLC). The helical transmembrane segment at 92–112 (IGWLALTDLVGQLLTTPVVIV) threads the bilayer. The Extracellular portion of the chain corresponds to 113 to 131 (VYLSKQRWEHIDPSGRLCT). A helical transmembrane segment spans residues 132 to 153 (FFGLTMTVFGLSSLFIASAMAV). At 154-175 (ERALAIRAPHWYASHMKTRATR) the chain is on the cytoplasmic side. The helical transmembrane segment at 176–197 (AVLLGVWLAVLAFALLPVLGVG) threads the bilayer. Residues 198–227 (QYTVQWPGTWCFISTGRGGNGTSSSHNWGN) are Extracellular-facing. The chain crosses the membrane as a helical span at residues 228 to 253 (LFFASAFAFLGLLALTVTFSCNLATI). Topologically, residues 254–283 (KALVSRCRAKATASQSSAQWGRITTETAIQ) are cytoplasmic. A helical membrane pass occupies residues 284–307 (LMGIMCVLSVCWSPLLIMMLKMIF). Residues 308 to 327 (NQTSVEHCKTHTEKQKECNF) are Extracellular-facing. A helical transmembrane segment spans residues 328 to 349 (FLIAVRLASLNQILDPWVYLLL). The Cytoplasmic portion of the chain corresponds to 350 to 390 (RKILLRKFCQIRYHTNNYASSSTSLPCQCSSTLMWSDHLER).

Belongs to the G-protein coupled receptor 1 family. As to quaternary structure, interacts (via C-terminus) with MKLN1. Detected in kidney. Expressed in small intestine, heart, pancreas, gastric fundic mucosa, mammary artery and pulmonary vessels.

It localises to the cell membrane. Its function is as follows. Receptor for prostaglandin E2 (PGE2). The activity of this receptor can couple to both the inhibition of adenylate cyclase mediated by G(i) proteins, and to an elevation of intracellular calcium. Required for normal development of fever in response to pyrinogens, including IL1B, prostaglandin E2 and bacterial lipopolysaccharide (LPS). Required for normal potentiation of platelet aggregation by prostaglandin E2, and thus plays a role in the regulation of blood coagulation. Required for increased HCO3(-) secretion in the duodenum in response to mucosal acidification, and thereby contributes to the protection of the mucosa against acid-induced ulceration. Not required for normal kidney function, normal urine volume and osmolality. This Homo sapiens (Human) protein is Prostaglandin E2 receptor EP3 subtype (PTGER3).